We begin with the raw amino-acid sequence, 300 residues long: Cation-efflux pump FieF (300 aa).

4 helical membrane passes run 12 to 32 (AAIA…FAWW), 39 to 59 (ILAA…NLLV), 82 to 102 (AALA…LTGI), and 114 to 134 (PGVG…LVSF). 2 residues coordinate Zn(2+): Asp45 and Asp49. The Zn(2+) site is built by His153 and Asp157. 2 helical membrane passes run 156–176 (SDVM…YGWH) and 178–198 (ADAL…LRMG).

This sequence belongs to the cation diffusion facilitator (CDF) transporter (TC 2.A.4) family. FieF subfamily. In terms of assembly, homodimer.

The protein resides in the cell inner membrane. It carries out the reaction Zn(2+)(in) + H(+)(out) = Zn(2+)(out) + H(+)(in). It catalyses the reaction Cd(2+)(in) + H(+)(out) = Cd(2+)(out) + H(+)(in). The catalysed reaction is Fe(2+)(in) + H(+)(out) = Fe(2+)(out) + H(+)(in). Functionally, divalent metal cation transporter which exports Zn(2+), Cd(2+) and possibly Fe(2+). May be involved in zinc and iron detoxification by efflux. The polypeptide is Cation-efflux pump FieF (Shigella boydii serotype 18 (strain CDC 3083-94 / BS512)).